The primary structure comprises 288 residues: Acetyl-coenzyme A carboxylase carboxyl transferase subunit beta (288 aa).

Residues 32 to 288 (LFAKCPACKH…LELHTEVENV (257 aa)) form the CoA carboxyltransferase N-terminal domain. Residues cysteine 36, cysteine 39, cysteine 54, and cysteine 57 each contribute to the Zn(2+) site. The segment at 36 to 57 (CPACKHTIYQKDLGKNKVCPNC) adopts a C4-type zinc-finger fold.

It belongs to the AccD/PCCB family. In terms of assembly, acetyl-CoA carboxylase is a heterohexamer composed of biotin carboxyl carrier protein (AccB), biotin carboxylase (AccC) and two subunits each of ACCase subunit alpha (AccA) and ACCase subunit beta (AccD). Zn(2+) is required as a cofactor.

Its subcellular location is the cytoplasm. It catalyses the reaction N(6)-carboxybiotinyl-L-lysyl-[protein] + acetyl-CoA = N(6)-biotinyl-L-lysyl-[protein] + malonyl-CoA. It participates in lipid metabolism; malonyl-CoA biosynthesis; malonyl-CoA from acetyl-CoA: step 1/1. Its function is as follows. Component of the acetyl coenzyme A carboxylase (ACC) complex. Biotin carboxylase (BC) catalyzes the carboxylation of biotin on its carrier protein (BCCP) and then the CO(2) group is transferred by the transcarboxylase to acetyl-CoA to form malonyl-CoA. The sequence is that of Acetyl-coenzyme A carboxylase carboxyl transferase subunit beta from Lactococcus lactis subsp. lactis (strain IL1403) (Streptococcus lactis).